Reading from the N-terminus, the 468-residue chain is Glutamate--tRNA ligase (468 aa).

Positions 14–24 (PSPTGFIHLGN) match the 'HIGH' region motif. The 'KMSKS' region motif lies at 246–250 (KMSKR). ATP is bound at residue K249.

The protein belongs to the class-I aminoacyl-tRNA synthetase family. Glutamate--tRNA ligase type 1 subfamily. Monomer.

Its subcellular location is the cytoplasm. The catalysed reaction is tRNA(Glu) + L-glutamate + ATP = L-glutamyl-tRNA(Glu) + AMP + diphosphate. Its function is as follows. Catalyzes the attachment of glutamate to tRNA(Glu) in a two-step reaction: glutamate is first activated by ATP to form Glu-AMP and then transferred to the acceptor end of tRNA(Glu). This is Glutamate--tRNA ligase from Leptothrix cholodnii (strain ATCC 51168 / LMG 8142 / SP-6) (Leptothrix discophora (strain SP-6)).